The chain runs to 467 residues: tRNA-2-methylthio-N(6)-dimethylallyladenosine synthase (467 aa).

One can recognise an MTTase N-terminal domain in the interval 5–125; the sequence is RKLHIKSYGC…LPQLLAQASR (121 aa). 6 residues coordinate [4Fe-4S] cluster: Cys14, Cys50, Cys88, Cys166, Cys170, and Cys173. The Radical SAM core domain occupies 152–384; the sequence is RARGVSAFVT…QSLIDSQQAA (233 aa). The region spanning 387–449 is the TRAM domain; that stretch reads KAAIGSVVDV…RYSLLGELVA (63 aa).

This sequence belongs to the methylthiotransferase family. MiaB subfamily. In terms of assembly, monomer. The cofactor is [4Fe-4S] cluster.

The protein resides in the cytoplasm. It carries out the reaction N(6)-dimethylallyladenosine(37) in tRNA + (sulfur carrier)-SH + AH2 + 2 S-adenosyl-L-methionine = 2-methylsulfanyl-N(6)-dimethylallyladenosine(37) in tRNA + (sulfur carrier)-H + 5'-deoxyadenosine + L-methionine + A + S-adenosyl-L-homocysteine + 2 H(+). In terms of biological role, catalyzes the methylthiolation of N6-(dimethylallyl)adenosine (i(6)A), leading to the formation of 2-methylthio-N6-(dimethylallyl)adenosine (ms(2)i(6)A) at position 37 in tRNAs that read codons beginning with uridine. The polypeptide is tRNA-2-methylthio-N(6)-dimethylallyladenosine synthase (Bradyrhizobium sp. (strain ORS 278)).